Consider the following 1724-residue polypeptide: MVMGIFANCIFCLKVKYLPQQQKKKLQTDIKENGGKFSFSLNPQCTHIILDNADVLSQYQLNSIQKNHVHIANPDFIWKSIREKRLLDVKNYDPYKPLDITPPPDQKASSSEVKTEGLCPDSATEEEDTVELTEFGMQNVEIPHLPQDFEVAKYNTLEKVGMEGGQEAVVVELQCSRDSRDCPFLISSHFLLDDGMETRRQFAIKKTSEDASEYFENYIEELKKQGFLLREHFTPEATQLASEQLQALLLEEVMNSSTLSQEVSDLVEMIWAEALGHLEHMLLKPVNRISLNDVSKAEGILLLVKAALKNGETAEQLQKMMTEFYRLIPHKGTMPKEVNLGLLAKKADLCQLIRDMVNVCETNLSKPNPPSLAKYRALRCKIEHVEQNTEEFLRVRKEVLQNHHSKSPVDVLQIFRVGRVNETTEFLSKLGNVRPLLHGSPVQNIVGILCRGLLLPKVVEDRGVQRTDVGNLGSGIYFSDSLSTSIKYSHPGETDGTRLLLICDVALGKCMDLHEKDFSLTEAPPGYDSVHGVSQTASVTTDFEDDEFVVYKTNQVKMKYIIKFSMPGDQIKDFHPSDHTELEEYRPEFSNFSKVEDYQLPDAKTSSSTKAGLQDASGNLVPLEDVHIKGRIIDTVAQVIVFQTYTNKSHVPIEAKYIFPLDDKAAVCGFEAFINGKHIVGEIKEKEEAQQEYLEAVTQGHGAYLMSQDAPDVFTVSVGNLPPKAKVLIKITYITELSILGTVGVFFMPATVAPWQQDKALNENLQDTVEKICIKEIGTKQSFSLTMSIEMPYVIEFIFSDTHELKQKRTDCKAVISTMEGSSLDSSGFSLHIGLSAAYLPRMWVEKHPEKESEACMLVFQPDLDVDLPDLASESEVIICLDCSSSMEGVTFLQAKQIALHALSLVGEKQKVNIIQFGTGYKELFSYPKHITSNTMAAEFIMSATPTMGNTDFWKTLRYLSLLYPARGSRNILLVSDGHLQDESLTLQLVKRSRPHTRLFACGIGSTANRHVLRILSQCGAGVFEYFNAKSKHSWRKQIEDQMTRLCSPSCHSVSVKWQQLNPDVPEALQAPAQVPSLFLNDRLLVYGFIPHCTQATLCALIQEKEFRTMVSTTELQKTTGTMIHKLAARALIRDYEDGILHENETSHEMKKQTLKSLIIKLSKENSLITQFTSFVAVEKRDENESPFPDIPKVSELIAKEDVDFLPYMSWQGEPQEAVRNQSLLASSEWPELRLSKRKHRKIPFSKRKMELSQPEVSEDFEEDGLGVLPAFTSNLERGGVEKLLDLSWTESCKPTATEPLFKKVSPWETSTSSFFPILAPAVGSYLPPTARAHSPASLSFASYRQVASFGSAAPPRQFDASQFSQGPVPGTCADWIPQSASCPTGPPQNPPSSPYCGIVFSGSSLSSAQSAPLQHPGGFTTRPSAGTFPELDSPQLHFSLPTDPDPIRGFGSYHPSASSPFHFQPSAASLTANLRLPMASALPEALCSQSRTTPVDLCLLEESVGSLEGSRCPVFAFQSSDTESDELSEVLQDSCFLQIKCDTKDDSILCFLEVKEEDEIVCIQHWQDAVPWTELLSLQTEDGFWKLTPELGLILNLNTNGLHSFLKQKGIQSLGVKGRECLLDLIATMLVLQFIRTRLEKEGIVFKSLMKMDDASISRNIPWAFEAIKQASEWVRRTEGQYPSICPRLELGNDWDSATKQLLGLQPISTVSPLHRVLHYSQG.

Residues 1 to 94 form the BRCT domain; sequence MVMGIFANCI…RLLDVKNYDP (94 aa). The Nuclear localization signal signature appears at 19 to 25; that stretch reads PQQQKKK. The disordered stretch occupies residues 97–123; sequence PLDITPPPDQKASSSEVKTEGLCPDSA. 2 positions are modified to phosphothreonine: Thr101 and Thr333. Residues 242–370 form the PARP alpha-helical domain; the sequence is SEQLQALLLE…ETNLSKPNPP (129 aa). The 205-residue stretch at 369 to 573 folds into the PARP catalytic domain; sequence PPSLAKYRAL…FSMPGDQIKD (205 aa). A VIT domain is found at 607-735; it reads SSTKAGLQDA…KVLIKITYIT (129 aa). Residues 876–1046 enclose the VWFA domain; the sequence is EVIICLDCSS…KQIEDQMTRL (171 aa). Position 1236 is a phosphoserine (Ser1236). The short motif at 1237-1249 is the Nuclear localization signal element; the sequence is KRKHRKIPFSKRK. The residue at position 1335 (Ser1335) is a Phosphoserine. The tract at residues 1408–1452 is disordered; sequence SAQSAPLQHPGGFTTRPSAGTFPELDSPQLHFSLPTDPDPIRGFG. The residue at position 1476 (Arg1476) is an Asymmetric dimethylarginine. Phosphoserine is present on Ser1504. The segment at 1562–1724 is interaction with the major vault protein; sequence VCIQHWQDAV…LHRVLHYSQG (163 aa).

Belongs to the ARTD/PARP family. Component of the vault ribonucleoprotein particle, at least composed of MVP, PARP4 and one or more vault RNAs (vRNAs). Interacts with TEP1. As to expression, widely expressed; the highest levels are in the kidney; also detected in heart, placenta, lung, liver, skeletal muscle, spleen, leukocytes and pancreas.

It is found in the cytoplasm. The protein localises to the nucleus. It localises to the cytoskeleton. The protein resides in the spindle. The enzyme catalyses L-aspartyl-[protein] + NAD(+) = 4-O-(ADP-D-ribosyl)-L-aspartyl-[protein] + nicotinamide. It catalyses the reaction L-glutamyl-[protein] + NAD(+) = 5-O-(ADP-D-ribosyl)-L-glutamyl-[protein] + nicotinamide. In terms of biological role, mono-ADP-ribosyltransferase that mediates mono-ADP-ribosylation of target proteins. This is Protein mono-ADP-ribosyltransferase PARP4 from Homo sapiens (Human).